The chain runs to 360 residues: Phospho-N-acetylmuramoyl-pentapeptide-transferase (360 aa).

10 helical membrane-spanning segments follow: residues 26–46 (AILG…AMIR), 70–90 (GTPT…TLLW), 97–117 (FVWV…IDDY), 134–154 (FFWQ…TAQA), 168–188 (VAIQ…VGAS), 199–219 (GLAI…AYLS), 236–256 (VGDL…FLWF), 263–283 (VFMG…LAVV), 288–308 (IVLV…IMQV), and 338–358 (VIVR…ATLK).

It belongs to the glycosyltransferase 4 family. MraY subfamily. Mg(2+) is required as a cofactor.

The protein resides in the cell inner membrane. It carries out the reaction UDP-N-acetyl-alpha-D-muramoyl-L-alanyl-gamma-D-glutamyl-meso-2,6-diaminopimeloyl-D-alanyl-D-alanine + di-trans,octa-cis-undecaprenyl phosphate = di-trans,octa-cis-undecaprenyl diphospho-N-acetyl-alpha-D-muramoyl-L-alanyl-D-glutamyl-meso-2,6-diaminopimeloyl-D-alanyl-D-alanine + UMP. The protein operates within cell wall biogenesis; peptidoglycan biosynthesis. Functionally, catalyzes the initial step of the lipid cycle reactions in the biosynthesis of the cell wall peptidoglycan: transfers peptidoglycan precursor phospho-MurNAc-pentapeptide from UDP-MurNAc-pentapeptide onto the lipid carrier undecaprenyl phosphate, yielding undecaprenyl-pyrophosphoryl-MurNAc-pentapeptide, known as lipid I. The protein is Phospho-N-acetylmuramoyl-pentapeptide-transferase of Thioalkalivibrio sulfidiphilus (strain HL-EbGR7).